The sequence spans 334 residues: D-fructose 1,6-bisphosphatase class 2/sedoheptulose 1,7-bisphosphatase (334 aa).

4 residues coordinate Mn(2+): Asp-33, Glu-57, Asp-85, and Glu-88. Substrate is bound by residues 88–90 (EGT), Tyr-119, 164–166 (RAR), and 186–188 (DGD). Position 213 (Glu-213) interacts with Mn(2+).

Belongs to the FBPase class 2 family. Homotetramer. Requires Mn(2+) as cofactor.

It catalyses the reaction beta-D-fructose 1,6-bisphosphate + H2O = beta-D-fructose 6-phosphate + phosphate. It carries out the reaction D-sedoheptulose 1,7-bisphosphate + H2O = D-sedoheptulose 7-phosphate + phosphate. The protein operates within carbohydrate biosynthesis; Calvin cycle. In terms of biological role, catalyzes the hydrolysis of fructose 1,6-bisphosphate (Fru 1,6-P2) and sedoheptulose 1,7-bisphosphate (Sed 1,7-P2) to fructose 6-phosphate and sedoheptulose 7-phosphate, respectively. This Synechococcus sp. (strain CC9902) protein is D-fructose 1,6-bisphosphatase class 2/sedoheptulose 1,7-bisphosphatase.